The following is a 473-amino-acid chain: GTPase Der (473 aa).

EngA-type G domains lie at 3–167 (LTIA…GKDK) and 204–379 (IRIA…RIWN). Residues 9 to 16 (GRPNVGKS), 56 to 60 (DTAGL), 119 to 122 (NKSE), 210 to 217 (GRPNTGKS), 257 to 261 (DTAGL), and 322 to 325 (NKWD) contribute to the GTP site. Residues 380–464 (RRISTGKLNR…PIRLSLRTSD (85 aa)) enclose the KH-like domain.

The protein belongs to the TRAFAC class TrmE-Era-EngA-EngB-Septin-like GTPase superfamily. EngA (Der) GTPase family. Associates with the 50S ribosomal subunit.

Its function is as follows. GTPase that plays an essential role in the late steps of ribosome biogenesis. The sequence is that of GTPase Der from Bartonella bacilliformis (strain ATCC 35685 / KC583 / Herrer 020/F12,63).